We begin with the raw amino-acid sequence, 86 residues long: Large ribosomal subunit protein bL27c (86 aa).

The segment at 1 to 20 is disordered; sequence MAHKKGSGSTRNGRDSNAQR. The span at 7 to 19 shows a compositional bias: polar residues; the sequence is SGSTRNGRDSNAQ.

Belongs to the bacterial ribosomal protein bL27 family.

It localises to the plastid. It is found in the chloroplast. This Guillardia theta (Cryptophyte) protein is Large ribosomal subunit protein bL27c (rpl27).